The chain runs to 319 residues: D-alanine--D-alanine ligase (319 aa).

Positions 109–313 (KRVWLAEGLP…YEQLCLHILQ (205 aa)) constitute an ATP-grasp domain. 139–194 (PDDLGLPLIVKPPREGSSIGVTKVLGYSQMQDAVALSARHDPDVLCEEFIDGAEVT) is an ATP binding site. The Mg(2+) site is built by Asp266, Glu280, and Asn282.

Belongs to the D-alanine--D-alanine ligase family. Mg(2+) is required as a cofactor. The cofactor is Mn(2+).

It is found in the cytoplasm. The enzyme catalyses 2 D-alanine + ATP = D-alanyl-D-alanine + ADP + phosphate + H(+). It functions in the pathway cell wall biogenesis; peptidoglycan biosynthesis. In terms of biological role, cell wall formation. The protein is D-alanine--D-alanine ligase of Methylibium petroleiphilum (strain ATCC BAA-1232 / LMG 22953 / PM1).